The sequence spans 331 residues: B-box zinc finger protein 21 (331 aa).

Zn(2+) is bound by residues C5, C8, C28, H34, C60, C63, C83, and H93. A B box-type 1; atypical zinc finger spans residues 5 to 47; that stretch reads CDVCDKEEASVFCTADEASLCGGCDHQVHHANKLASKHLRFSL. Residues 60 to 102 form a B box-type 2; atypical zinc finger; sequence CDICQDKKALLFCQQDRAILCKDCDSSIHAANEHTKKHDRFLL. Low complexity-rich tracts occupy residues 115–126 and 228–238; these read KPTSKSSSSSSS and NNNNNNNNNNN. Disordered stretches follow at residues 115-167 and 209-241; these read KPTS…GGDA and DDDG…NTVS.

Interacts with COP1, HY5 and BBX32. Interacts with FLZ1.

The protein localises to the nucleus. Transcription activator that acts as a positive regulator of seedling photomorphogenesis. Acts downstream of COP1 and play an important role in early and long-term adjustment of the shade avoidance syndrome (SAS) responses in natural environments. In Arabidopsis thaliana (Mouse-ear cress), this protein is B-box zinc finger protein 21.